The sequence spans 481 residues: RuvB-like helicase 2 (481 aa).

ATP is bound at residue G73–T80. Residues E453–H481 are disordered.

The protein belongs to the RuvB family. As to quaternary structure, forms homohexameric rings. May form a dodecamer with rept made of two stacked hexameric rings. Component of the chromatin remodeling Ino80 complex. Interacts with Myc and pont. Higher expression occurs in primordia of mesoderm, anterior and posterior midgut and cephalic furrow early in gastrulation, as well as in endoderm and mesoderm lineages during germ band extension. Later in development expression is only maintained in endoderm cells. Expressed in thoracic and abdominal segment neural precursors of all embryonic chordotonal organs.

It localises to the nucleus. The catalysed reaction is ATP + H2O = ADP + phosphate + H(+). Functionally, acts as a transcriptional coactivator in Wg signaling caused by altered arm signaling. Pont and rept interfere antagonistically with nuclear arm signaling function, and are required to enhance or reduce arm activity, respectively. Also an essential cofactor for the normal function of Myc; required for cellular proliferation and growth. In terms of biological role, proposed core component of the chromatin remodeling Ino80 complex which is involved in transcriptional regulation, DNA replication and probably DNA repair. The polypeptide is RuvB-like helicase 2 (Drosophila melanogaster (Fruit fly)).